A 308-amino-acid chain; its full sequence is UDP-3-O-acyl-N-acetylglucosamine deacetylase (308 aa).

His78, His235, and Asp239 together coordinate Zn(2+). His262 (proton donor) is an active-site residue.

Belongs to the LpxC family. Requires Zn(2+) as cofactor.

The catalysed reaction is a UDP-3-O-[(3R)-3-hydroxyacyl]-N-acetyl-alpha-D-glucosamine + H2O = a UDP-3-O-[(3R)-3-hydroxyacyl]-alpha-D-glucosamine + acetate. The protein operates within glycolipid biosynthesis; lipid IV(A) biosynthesis; lipid IV(A) from (3R)-3-hydroxytetradecanoyl-[acyl-carrier-protein] and UDP-N-acetyl-alpha-D-glucosamine: step 2/6. In terms of biological role, catalyzes the hydrolysis of UDP-3-O-myristoyl-N-acetylglucosamine to form UDP-3-O-myristoylglucosamine and acetate, the committed step in lipid A biosynthesis. The polypeptide is UDP-3-O-acyl-N-acetylglucosamine deacetylase (Anaeromyxobacter dehalogenans (strain 2CP-C)).